The primary structure comprises 276 residues: Formamidopyrimidine-DNA glycosylase (276 aa).

Residue Pro-2 is the Schiff-base intermediate with DNA of the active site. The active-site Proton donor is the Glu-3. The active-site Proton donor; for beta-elimination activity is Lys-58. DNA is bound by residues His-94, Arg-112, and Arg-157. The FPG-type zinc finger occupies 242–276 (FVYDRAGEPCRVCGAPIRQIVQGQRSTYFCPNCQR). Arg-266 (proton donor; for delta-elimination activity) is an active-site residue.

It belongs to the FPG family. In terms of assembly, monomer. It depends on Zn(2+) as a cofactor.

The catalysed reaction is Hydrolysis of DNA containing ring-opened 7-methylguanine residues, releasing 2,6-diamino-4-hydroxy-5-(N-methyl)formamidopyrimidine.. It catalyses the reaction 2'-deoxyribonucleotide-(2'-deoxyribose 5'-phosphate)-2'-deoxyribonucleotide-DNA = a 3'-end 2'-deoxyribonucleotide-(2,3-dehydro-2,3-deoxyribose 5'-phosphate)-DNA + a 5'-end 5'-phospho-2'-deoxyribonucleoside-DNA + H(+). Its function is as follows. Involved in base excision repair of DNA damaged by oxidation or by mutagenic agents. Acts as a DNA glycosylase that recognizes and removes damaged bases. Has a preference for oxidized purines, such as 7,8-dihydro-8-oxoguanine (8-oxoG). Has AP (apurinic/apyrimidinic) lyase activity and introduces nicks in the DNA strand. Cleaves the DNA backbone by beta-delta elimination to generate a single-strand break at the site of the removed base with both 3'- and 5'-phosphates. This is Formamidopyrimidine-DNA glycosylase from Burkholderia pseudomallei (strain 1710b).